The sequence spans 267 residues: Regulatory protein RecX (267 aa).

It belongs to the RecX family.

Its subcellular location is the cytoplasm. Modulates RecA activity. This is Regulatory protein RecX from Staphylococcus carnosus (strain TM300).